The following is a 98-amino-acid chain: Small ribosomal subunit protein bS16 (98 aa).

It belongs to the bacterial ribosomal protein bS16 family.

The chain is Small ribosomal subunit protein bS16 from Pseudothermotoga lettingae (strain ATCC BAA-301 / DSM 14385 / NBRC 107922 / TMO) (Thermotoga lettingae).